Reading from the N-terminus, the 342-residue chain is Galactose mutarotase (342 aa).

Phosphoserine is present on Ser-14. Beta-D-galactose contacts are provided by residues 81-82 (NR), His-107, 176-178 (HSY), Asp-243, Gln-279, and Glu-307. His-176 (proton donor) is an active-site residue. Glu-307 (proton acceptor) is an active-site residue.

It belongs to the aldose epimerase family. Monomer.

The protein resides in the cytoplasm. The enzyme catalyses alpha-D-galactose = beta-D-galactose. It carries out the reaction alpha-D-glucose = beta-D-glucose. Its pathway is carbohydrate metabolism; hexose metabolism. It functions in the pathway carbohydrate metabolism; galactose metabolism. Functionally, mutarotase that catalyzes the interconversion of beta-D-galactose and alpha-D-galactose during galactose metabolism. Beta-D-galactose is metabolized in the liver into glucose 1-phosphate, the primary metabolic fuel, by the action of four enzymes that constitute the Leloir pathway: GALM, GALK1 (galactokinase), GALT (galactose-1-phosphate uridylyltransferase) and GALE (UDP-galactose-4'-epimerase). Involved in the maintenance of the equilibrium between the beta- and alpha-anomers of galactose, therefore ensuring a sufficient supply of the alpha-anomer for GALK1. Also active on D-glucose although shows a preference for galactose over glucose. The chain is Galactose mutarotase from Mus musculus (Mouse).